A 316-amino-acid polypeptide reads, in one-letter code: Nod factor export ATP-binding protein I (316 aa).

The ABC transporter domain maps to 18–248; it reads IDFSDVSKTY…LIGCEVIEIY (231 aa). 50–57 contacts ATP; it reads GPNGAGKS.

The protein belongs to the ABC transporter superfamily. Lipooligosaccharide exporter (TC 3.A.1.102) family. As to quaternary structure, the complex is composed of two ATP-binding proteins (NodI) and two transmembrane proteins (NodJ).

The protein resides in the cell inner membrane. Functionally, part of the ABC transporter complex NodIJ involved in the export of the nodulation factors (Nod factors), the bacterial signal molecules that induce symbiosis and subsequent nodulation induction. Nod factors are LCO (lipo-chitin oligosaccharide), a modified beta-1,4-linked N-acetylglucosamine oligosaccharide. This subunit is responsible for energy coupling to the transport system. This is Nod factor export ATP-binding protein I from Rhizobium etli (strain ATCC 51251 / DSM 11541 / JCM 21823 / NBRC 15573 / CFN 42).